A 222-amino-acid polypeptide reads, in one-letter code: PKHD-type hydroxylase P9301_13621 (222 aa).

Residues 81 to 175 (KIHGIMFTKS…RLVCVGWIES (95 aa)) enclose the Fe2OG dioxygenase domain. Residues His99, Asp101, and His156 each contribute to the Fe cation site. Arg166 contacts 2-oxoglutarate.

It depends on Fe(2+) as a cofactor. L-ascorbate is required as a cofactor.

The chain is PKHD-type hydroxylase P9301_13621 from Prochlorococcus marinus (strain MIT 9301).